A 271-amino-acid chain; its full sequence is CAAX prenyl protease 2 (271 aa).

Residues 1–9 (MISSYKYNP) lie on the Extracellular side of the membrane. Residues 10 to 30 (KLYFLSTFVVTYILWFTGAYL) form a helical membrane-spanning segment. Residues 31-38 (SFSSTYSG) are Cytoplasmic-facing. The chain crosses the membrane as a helical span at residues 39–59 (IYMLIMLPGLMAPFIISTILI). Topologically, residues 60–82 (AKSKNNELKKDFINRLFNLKLIN) are extracellular. Residues 83–105 (LKTIPVVFLLMPAVILLSILLSI) traverse the membrane as a helical segment. The Cytoplasmic segment spans residues 106 to 125 (PFGGSISQFQFSGGFSFSTD). Residues 126–149 (FVPVLFLLLLAATFEELGWRGYAF) form a helical membrane-spanning segment. E140 functions as the Proton donor/acceptor in the catalytic mechanism. Topologically, residues 150–159 (DSLQSRYSLF) are extracellular. The helical transmembrane segment at 160 to 179 (KASILFGIFWSLWHFPLIFV) threads the bilayer. The Proton donor/acceptor role is filled by H173. Over 180 to 192 (NNSYQYEIFNQSI) the chain is Cytoplasmic. A helical membrane pass occupies residues 193–213 (WYGLNFFLSILPMGIIITWMC). Topologically, residues 214–219 (LKNRKS) are extracellular. The chain crosses the membrane as a helical span at residues 220-237 (IILAIIFHFLINLNQELL). Topologically, residues 238–243 (AITQDT) are cytoplasmic. The chain crosses the membrane as a helical span at residues 244 to 263 (KIIETGVLFLVAAAIILYDK). The Extracellular portion of the chain corresponds to 264–271 (KMFFEKLG).

The protein belongs to the peptidase U48 family.

The protein localises to the cell membrane. The enzyme catalyses Hydrolyzes the peptide bond -P2-(S-farnesyl or geranylgeranyl)C-P1'-P2'-P3'-COOH where P1' and P2' are amino acids with aliphatic sidechains and P3' is any C-terminal residue.. Activity is unaffected by metalloprotease inhibitors 5 mM EDTA and 5 mM Zn(2+). Activity partially inhibited by 1,10-phenanthroline and 1,7-phenanthroline. Its function is as follows. Protease involved in the processing of a variety of prenylated proteins containing the C-terminal CAAX motif, where C is a cysteine modified with an isoprenoid lipid, A is an aliphatic amino acid and X is any C-terminal amino acid. Proteolytically removes the C-terminal three residues of farnesylated proteins, leaving the prenylated cysteine as the new C-terminus. Hydrolysis depends on a farnesylated cysteine residue and no activity is shown towards geranylgeranylated peptides. The chain is CAAX prenyl protease 2 from Methanococcus maripaludis (strain DSM 14266 / JCM 13030 / NBRC 101832 / S2 / LL).